Here is a 59-residue protein sequence, read N- to C-terminus: Protein SspF (59 aa).

This sequence belongs to the alpha/beta-type SASP family.

May play some important role in either sporulation or the dormant spore. In Bacillus cereus (strain ATCC 14579 / DSM 31 / CCUG 7414 / JCM 2152 / NBRC 15305 / NCIMB 9373 / NCTC 2599 / NRRL B-3711), this protein is Protein SspF (sspF).